We begin with the raw amino-acid sequence, 514 residues long: ATP synthase subunit alpha (514 aa).

Residue 170-177 (GDRQTGKT) participates in ATP binding.

The protein belongs to the ATPase alpha/beta chains family. F-type ATPases have 2 components, CF(1) - the catalytic core - and CF(0) - the membrane proton channel. CF(1) has five subunits: alpha(3), beta(3), gamma(1), delta(1), epsilon(1). CF(0) has three main subunits: a(1), b(2) and c(9-12). The alpha and beta chains form an alternating ring which encloses part of the gamma chain. CF(1) is attached to CF(0) by a central stalk formed by the gamma and epsilon chains, while a peripheral stalk is formed by the delta and b chains.

The protein localises to the cell inner membrane. The enzyme catalyses ATP + H2O + 4 H(+)(in) = ADP + phosphate + 5 H(+)(out). Functionally, produces ATP from ADP in the presence of a proton gradient across the membrane. The alpha chain is a regulatory subunit. The sequence is that of ATP synthase subunit alpha from Acidithiobacillus ferrooxidans (strain ATCC 23270 / DSM 14882 / CIP 104768 / NCIMB 8455) (Ferrobacillus ferrooxidans (strain ATCC 23270)).